The chain runs to 114 residues: Protein S100-A9 (114 aa).

The residue at position 2 (threonine 2) is a Blocked amino end (Thr). Residue cysteine 3 is modified to S-nitrosocysteine; transient. 2 EF-hand domains span residues 12–47 (IETI…DLQN) and 54–89 (KNEK…LTWA). Histidine 20 lines the Zn(2+) pocket. Ca(2+) contacts are provided by serine 23, leucine 26, and histidine 28. Residue aspartate 30 coordinates Zn(2+). Ca(2+) contacts are provided by threonine 31, glutamate 36, aspartate 67, asparagine 69, aspartate 71, glutamine 73, and glutamate 78. The Zn(2+) site is built by histidine 91 and histidine 95. Residues 93 to 102 (KMHEGDEGPG) show a composition bias toward basic and acidic residues. The disordered stretch occupies residues 93-114 (KMHEGDEGPGHHHKPGLGEGTP). Residue histidine 105 is modified to Pros-methylhistidine. Position 113 is a phosphothreonine; by MAPK14 (threonine 113).

Homodimer. Preferentially exists as a heterodimer or heterotetramer with S100A8 known as calprotectin (S100A8/A9). S100A9 interacts with ATP2A2. S100A9 interacts with AGER, and with the heterodimeric complex formed by TLR4 and LY96 in the presence of calcium and/or zinc ions. S100A9 binds quinoline-3-carboxamides in the presence of calcium and/or zinc ions. S100A9 interacts with amyloid-beta protein 40. Calprotectin (S100A8/9) interacts with CEACAM3 and tubulin filaments in a calcium-dependent manner. Heterotetrameric calprotectin (S100A8/A9) interacts with ANXA6 and associates with tubulin filaments in activated monocytes. Calprotectin (S100A8/9) interacts with NCF2/P67PHOX, RAC1, RAC2, CYBA and CYBB. Calprotectin (S100A8/9) interacts with NOS2 to form the iNOS-S100A8/A9 transnitrosylase complex; induced by LDL(ox). Calprotectin (S100A8/9) interacts with CD69. In terms of processing, phosphorylated. Phosphorylation inhibits activation of tubulin polymerization. S-nitrosylation of Cys-3 is implicated in LDL(ox)-induced S-nitrosylation of GAPDH at 'Cys-247' through a transnitrosylase mechanism involving a iNOS-S100A8/9 complex. Post-translationally, methylation at His-105 by METTL9 reduces zinc-binding without affecting heterodimerization with S100A8. In terms of tissue distribution, calprotectin (S100A8/9) is predominantly expressed in myeloid cells. Except for inflammatory conditions, the expression is restricted to a specific stage of myeloid differentiation since both proteins are expressed in circulating neutrophils and monocytes but are absent in normal tissue macrophages and lymphocytes. Under chronic inflammatory conditions, such as psoriasis and malignant disorders, also expressed in the epidermis. Found in high concentrations at local sites of inflammation or in the serum of patients with inflammatory diseases such as rheumatoid, cystic fibrosis, inflammatory bowel disease, Crohn's disease, giant cell arteritis, cystic fibrosis, Sjogren's syndrome, systemic lupus erythematosus, and progressive systemic sclerosis. Involved in the formation and deposition of amyloids in the aging prostate known as corpora amylacea inclusions. Strongly up-regulated in many tumors, including gastric, esophageal, colon, pancreatic, bladder, ovarian, thyroid, breast and skin cancers.

It localises to the secreted. It is found in the cytoplasm. The protein localises to the cytoskeleton. The protein resides in the cell membrane. Functionally, S100A9 is a calcium- and zinc-binding protein which plays a prominent role in the regulation of inflammatory processes and immune response. It can induce neutrophil chemotaxis, adhesion, can increase the bactericidal activity of neutrophils by promoting phagocytosis via activation of SYK, PI3K/AKT, and ERK1/2 and can induce degranulation of neutrophils by a MAPK-dependent mechanism. Predominantly found as calprotectin (S100A8/A9) which has a wide plethora of intra- and extracellular functions. The intracellular functions include: facilitating leukocyte arachidonic acid trafficking and metabolism, modulation of the tubulin-dependent cytoskeleton during migration of phagocytes and activation of the neutrophilic NADPH-oxidase. Also participates in regulatory T-cell differentiation together with CD69. Activates NADPH-oxidase by facilitating the enzyme complex assembly at the cell membrane, transferring arachidonic acid, an essential cofactor, to the enzyme complex and S100A8 contributes to the enzyme assembly by directly binding to NCF2/P67PHOX. The extracellular functions involve pro-inflammatory, antimicrobial, oxidant-scavenging and apoptosis-inducing activities. Its pro-inflammatory activity includes recruitment of leukocytes, promotion of cytokine and chemokine production, and regulation of leukocyte adhesion and migration. Acts as an alarmin or a danger associated molecular pattern (DAMP) molecule and stimulates innate immune cells via binding to pattern recognition receptors such as Toll-like receptor 4 (TLR4) and receptor for advanced glycation endproducts (AGER). Binding to TLR4 and AGER activates the MAP-kinase and NF-kappa-B signaling pathways resulting in the amplification of the pro-inflammatory cascade. Has antimicrobial activity towards bacteria and fungi and exerts its antimicrobial activity probably via chelation of Zn(2+) which is essential for microbial growth. Can induce cell death via autophagy and apoptosis and this occurs through the cross-talk of mitochondria and lysosomes via reactive oxygen species (ROS) and the process involves BNIP3. Can regulate neutrophil number and apoptosis by an anti-apoptotic effect; regulates cell survival via ITGAM/ITGB and TLR4 and a signaling mechanism involving MEK-ERK. Its role as an oxidant scavenger has a protective role in preventing exaggerated tissue damage by scavenging oxidants. Can act as a potent amplifier of inflammation in autoimmunity as well as in cancer development and tumor spread. Has transnitrosylase activity; in oxidatively-modified low-densitity lipoprotein (LDL(ox))-induced S-nitrosylation of GAPDH on 'Cys-247' proposed to transfer the NO moiety from NOS2/iNOS to GAPDH via its own S-nitrosylated Cys-3. The iNOS-S100A8/A9 transnitrosylase complex is proposed to also direct selective inflammatory stimulus-dependent S-nitrosylation of multiple targets such as ANXA5, EZR, MSN and VIM by recognizing a [IL]-x-C-x-x-[DE] motif. The chain is Protein S100-A9 from Homo sapiens (Human).